The chain runs to 402 residues: Beta-peptidyl aminopeptidase BapA (402 aa).

A signal peptide spans 1–29; that stretch reads MTSTQRLWSGALPLLTALIVSIAATASLA. Residue Ser279 is the Nucleophile of the active site. Catalysis depends on proton donor/acceptor residues Ser317 and Glu319.

This sequence belongs to the peptidase S58 family. In terms of assembly, heterooctamer of 4 heterodimers ((alpha:beta)4); each heterodimer is composed of an alpha subunit and a beta subunit processed from the same precursor. Autoproteolytic processing to generate the alpha and beta subunit is required for self-activation and is proposed to use a similar mechanism as substrate cleavage.

The protein localises to the periplasm. It catalyses the reaction Cleaves N-terminal beta-homoamino acids from peptides composed of 2 to 6 amino acids.. Inhibited by AEBSF (4-(2-aminoethyl)benzenesulfonyl fluoride, Pefabloc SC), ampicillin and AMP(hyd) (ampillicin-derived penicilloic acid). Functionally, beta-aminopeptidase that can cleave synthetic beta-peptides which consist of backbone-elongated beta-amino acid residues that are not processed by common proteolytic enzymes. Can cleave the beta-peptides beta-homoVal-beta-homoAla-beta-homoLeu and beta-homoAla-beta-homoLeu. Requires a beta-amino acid at the N-terminus of peptide substrates and cleaves the peptide bond between the N-terminal beta-amino acid and the amino acid at the second position of tripeptidic substrates of the general structure H-betahXaa-Ile-betahTyr-OH according to the following preferences with regard to the side chain of the N-terminal beta-amino acid: aliphatic and aromatic &gt; OH-containing &gt; hydrogen, basic and polar. This chain is Beta-peptidyl aminopeptidase BapA, found in Sphingosinicella xenopeptidilytica.